The primary structure comprises 135 residues: Ribosome-binding factor A (135 aa).

Belongs to the RbfA family. Monomer. Binds 30S ribosomal subunits, but not 50S ribosomal subunits or 70S ribosomes.

The protein resides in the cytoplasm. Functionally, one of several proteins that assist in the late maturation steps of the functional core of the 30S ribosomal subunit. Associates with free 30S ribosomal subunits (but not with 30S subunits that are part of 70S ribosomes or polysomes). Required for efficient processing of 16S rRNA. May interact with the 5'-terminal helix region of 16S rRNA. This chain is Ribosome-binding factor A, found in Aliivibrio fischeri (strain ATCC 700601 / ES114) (Vibrio fischeri).